The chain runs to 581 residues: MKASQFFVSTLKEAPADAEITSHKLMMRAGMIKRLGAGIYSYMPMGLRVIRKVEAIIREEMNRAGAVELLMPVVQPAELWQETGRFEKMGPELMRVKDRHDRDFIIQPTSEEVVTDIARQELRSYRQLPKNFYHIQTKFRDERRPRFGVMRGREFTMKDAYSFDRDEAAAGRSYDAMYAAYGRIFDRFGLSYRAVAADTGAIGGDRSHEFQVIAETGEDAIVYCPTSDYAANIELAECLPLAAQRPVPIQPLTKTPTPGKATCADVAALLNLPLTQTVKSLVLATDDRNDGGDIVKTTVWLLLVRGDHELNEVKAGKLPGLKAGFRFATVGEIDAHFGCKPGYLGPIGLKQPVRVIADRTVAHMGDFVCGANDADFHYTGVNWGRDLPEPDLVADIRNAVVGDPSPDGKGVLAIQRGIEVGHVFYLGTKYSAAMNATYLDETGKPRLMEMGCYGIGVTRILGAAIEQRHDARGIVWPTAIAPFEVVICPIGYDRSAEVRQAADTLHDELQALGMDLMLDDRGERPGAMFADWELIGIPQRVVISDRGLKEGQVELQGRQEAEAGKLAVAEVVAQLRARLRD.

Belongs to the class-II aminoacyl-tRNA synthetase family. ProS type 1 subfamily. As to quaternary structure, homodimer.

The protein resides in the cytoplasm. It catalyses the reaction tRNA(Pro) + L-proline + ATP = L-prolyl-tRNA(Pro) + AMP + diphosphate. In terms of biological role, catalyzes the attachment of proline to tRNA(Pro) in a two-step reaction: proline is first activated by ATP to form Pro-AMP and then transferred to the acceptor end of tRNA(Pro). As ProRS can inadvertently accommodate and process non-cognate amino acids such as alanine and cysteine, to avoid such errors it has two additional distinct editing activities against alanine. One activity is designated as 'pretransfer' editing and involves the tRNA(Pro)-independent hydrolysis of activated Ala-AMP. The other activity is designated 'posttransfer' editing and involves deacylation of mischarged Ala-tRNA(Pro). The misacylated Cys-tRNA(Pro) is not edited by ProRS. This is Proline--tRNA ligase from Methylibium petroleiphilum (strain ATCC BAA-1232 / LMG 22953 / PM1).